Here is a 418-residue protein sequence, read N- to C-terminus: Equilibrative nucleotide transporter 6 (418 aa).

Transmembrane regions (helical) follow at residues 19–39 (AMIV…SMLT), 56–76 (VLTL…AYHE), 86–106 (LIGY…DLAT), 112–132 (FGPY…DATV), 142–162 (LMCP…GALT), 186–206 (MFLA…AYVL), 264–284 (HAVN…GFLY), 291–311 (GLGA…DLVG), 326–346 (KLIT…YFTA), 353–373 (WMIM…VCIM), and 392–412 (LVIF…LWLI).

This sequence belongs to the SLC29A/ENT transporter (TC 2.A.57) family. Expressed in leaves and siliques.

The protein localises to the cell membrane. In terms of biological role, nucleoside transporter that can mediate uptake of adenosine, uridine, guanosine or cytidine when expressed in a heterologous system (yeast). In Arabidopsis thaliana (Mouse-ear cress), this protein is Equilibrative nucleotide transporter 6 (ENT6).